Here is a 496-residue protein sequence, read N- to C-terminus: L-arabinose isomerase (496 aa).

Mn(2+) contacts are provided by Glu306, Glu331, His348, and His447.

It belongs to the arabinose isomerase family. Mn(2+) serves as cofactor.

It catalyses the reaction beta-L-arabinopyranose = L-ribulose. It functions in the pathway carbohydrate degradation; L-arabinose degradation via L-ribulose; D-xylulose 5-phosphate from L-arabinose (bacterial route): step 1/3. Catalyzes the conversion of L-arabinose to L-ribulose. The polypeptide is L-arabinose isomerase (Geobacillus thermodenitrificans (strain NG80-2)).